Reading from the N-terminus, the 455-residue chain is Folate transporter 2 (455 aa).

The next 8 membrane-spanning stretches (helical) occupy residues 42–64 (IVVY…IYYL), 84–103 (YIPF…FSIF), 110–131 (YLFL…LNLS), 137–157 (LILF…EALV), 177–195 (IASK…GYFL), 201–221 (EYIF…CLFL), 242–261 (FINT…YMSG), and 281–301 (SFMG…IIIY). N-linked (GlcNAc...) asparagine glycosylation occurs at Asn307. The next 2 membrane-spanning stretches (helical) occupy residues 313 to 331 (TLII…PIIL) and 347 to 367 (VLSG…PLFI). An N-linked (GlcNAc...) asparagine glycan is attached at Asn416. The helical transmembrane segment at 417–438 (LSLYILTCGFFLLFSLTLVPLL) threads the bilayer.

It belongs to the major facilitator superfamily. Folate-biopterin transporter (TC 2.A.71) family.

Its subcellular location is the cell membrane. The catalysed reaction is folate(in) + H(+)(in) = folate(out) + H(+)(out). It carries out the reaction (6S)-5-methyl-5,6,7,8-tetrahydrofolate(in) + H(+)(in) = (6S)-5-methyl-5,6,7,8-tetrahydrofolate(out) + H(+)(out). Transport of folates is inhibited by probenecid and methotrexate. Functionally, folate transporter with broad substrate specificity. Transports folic acid, folinic acid, pteroic acid, dihydropteroic acid, the folate precursor p-amino benzoic acid (pABA) and the human folate catabolite pABA monoglutamate. Can transport 5-methyltetrahydrofolate with low efficiency. This is Folate transporter 2 from Plasmodium falciparum (isolate 3D7).